Consider the following 432-residue polypeptide: Benzoyl-CoA reductase subunit B (432 aa).

Belongs to the FldB/FldC dehydratase alpha/beta subunit family. In terms of assembly, heterotetramer composed of A, B, C, and D subunits. The cofactor is iron-sulfur cluster. An oxidized flavin is required as a cofactor.

The catalysed reaction is cyclohexa-1,5-diene-1-carbonyl-CoA + oxidized 2[4Fe-4S]-[ferredoxin] + 2 ADP + 2 phosphate = reduced 2[4Fe-4S]-[ferredoxin] + benzoyl-CoA + 2 ATP + 2 H2O. The enzyme catalyses 3-hydroxybenzoyl-CoA + AH2 + 2 ATP + 2 H2O = 3-hydroxycyclohexa-1,5-diene-1-carbonyl-CoA + A + 2 ADP + 2 phosphate + 2 H(+). Its function is as follows. Catalyzes the anaerobic reduction of benzoyl-CoA and 3-hydroxybenzoyl-CoA to form cyclohexa-1,5-diene-1-carbonyl-CoA and 3-hydroxycyclohexa-1,5-diene-1-carbonyl-CoA, respectively. The enzyme also reduces other benzoyl-CoA analogs with small substituents at the aromatic ring. The protein is Benzoyl-CoA reductase subunit B (bcrB) of Thauera aromatica.